A 727-amino-acid polypeptide reads, in one-letter code: Elongation factor 2 (727 aa).

The tr-type G domain occupies 19-260 (DQIRNMGICA…MAIKHLPNPL (242 aa)). GTP is bound by residues 28–35 (AHIDHGKT), 94–98 (DTPGH), and 148–151 (NKVD). Position 603 is a diphthamide (His603).

The protein belongs to the TRAFAC class translation factor GTPase superfamily. Classic translation factor GTPase family. EF-G/EF-2 subfamily.

The protein resides in the cytoplasm. Functionally, catalyzes the GTP-dependent ribosomal translocation step during translation elongation. During this step, the ribosome changes from the pre-translocational (PRE) to the post-translocational (POST) state as the newly formed A-site-bound peptidyl-tRNA and P-site-bound deacylated tRNA move to the P and E sites, respectively. Catalyzes the coordinated movement of the two tRNA molecules, the mRNA and conformational changes in the ribosome. This Methanococcus maripaludis (strain C7 / ATCC BAA-1331) protein is Elongation factor 2.